We begin with the raw amino-acid sequence, 449 residues long: Phosphoglucosamine mutase (449 aa).

The Phosphoserine intermediate role is filled by Ser105. Residues Ser105, Asp242, Asp244, and Asp246 each contribute to the Mg(2+) site. Ser105 carries the phosphoserine modification.

The protein belongs to the phosphohexose mutase family. Mg(2+) serves as cofactor. Post-translationally, activated by phosphorylation.

It carries out the reaction alpha-D-glucosamine 1-phosphate = D-glucosamine 6-phosphate. Functionally, catalyzes the conversion of glucosamine-6-phosphate to glucosamine-1-phosphate. The chain is Phosphoglucosamine mutase from Clavibacter sepedonicus (Clavibacter michiganensis subsp. sepedonicus).